Reading from the N-terminus, the 384-residue chain is Ribosomal RNA large subunit methyltransferase G (384 aa).

Belongs to the methyltransferase superfamily. RlmG family.

The protein localises to the cytoplasm. It catalyses the reaction guanosine(1835) in 23S rRNA + S-adenosyl-L-methionine = N(2)-methylguanosine(1835) in 23S rRNA + S-adenosyl-L-homocysteine + H(+). Its function is as follows. Specifically methylates the guanine in position 1835 (m2G1835) of 23S rRNA. This is Ribosomal RNA large subunit methyltransferase G from Pseudoalteromonas atlantica (strain T6c / ATCC BAA-1087).